The chain runs to 399 residues: RNA-binding protein cabeza (399 aa).

Positions 1 to 12 (MERGGYGGGSGQ) are enriched in gly residues. Residues 1–82 (MERGGYGGGS…RGGNSYGNGG (82 aa)) form a disordered region. A compositionally biased stretch (polar residues) spans 24–34 (YQQMPNKTGNY). The span at 43 to 69 (KQGGGYDSGSGHRGSGGSGNGGGGGGS) shows a compositional bias: gly residues. Positions 120 to 206 (DTIFVSGMDP…NAIKVSLAQR (87 aa)) constitute an RRM domain. Disordered regions lie at residues 209–276 (NWNK…QPRD) and 300–399 (TPKG…SRPY). The span at 212–271 (KGGGGGGGGGGRGGFGGRRGGGGGGGGGGGGGGRFDRGGGGGGGRYDRGGGGGGGGGGGN) shows a compositional bias: gly residues. Residues 275-304 (RDGDWKCNSCNNTNFAWRNECNRCKTPKGD) form a RanBP2-type zinc finger. Composition is skewed to gly residues over residues 308 to 339 (SSGG…GGGY), 347 to 361 (NSQG…GGGY), and 368 to 380 (NGGG…GGGG). Over residues 387–399 (PMRNDGGMRSRPY) the composition is skewed to low complexity.

This sequence belongs to the RRM TET family. As to expression, ubiquitous. Enriched in the brain and central nervous system during embryogenesis. Enriched in the adult head. Embryos contain both isoforms A and B, whereas later in development (heads and torsos) only isoform B is detected.

Its subcellular location is the nucleus. May participate in a function common to the expression of most genes transcribed by RNA polymerase II. The polypeptide is RNA-binding protein cabeza (caz) (Drosophila melanogaster (Fruit fly)).